The following is a 62-amino-acid chain: Large ribosomal subunit protein bL28 (62 aa).

It belongs to the bacterial ribosomal protein bL28 family.

In Parafrankia sp. (strain EAN1pec), this protein is Large ribosomal subunit protein bL28.